Consider the following 467-residue polypeptide: Zinc finger protein 410 (467 aa).

Disordered regions lie at residues 84-111 and 187-214; these read PDGEETRAQTVQKSPEFLSTPESPSLLQ and NAKTSSNGENVHLGSGDGQPKDSGPLPQ. 5 C2H2-type zinc fingers span residues 219 to 243, 249 to 273, 279 to 303, 309 to 333, and 339 to 362; these read LKCTVEGCDRTFVWPAHFKYHLKTH, FICPAAGCGKSFYVLQRLKVHMRTH, FVCPESNCGKQFTTAGNLKNHLRIH, FLCEAQGCGRSFAEYSSLRKHLVVH, and HQCQVCGKTFSQSGSRNVHMRKHH. The Zn(2+) site is built by Cys-221, Cys-226, His-239, His-243, Cys-251, Cys-256, His-269, His-273, Cys-281, Cys-286, His-299, His-303, Cys-311, Cys-316, His-329, His-333, Cys-341, Cys-344, His-357, and His-361.

Interacts with CDKN2A/p14ARF. In terms of processing, O-glycosylated. O-GlcNAcylation may occur in response to increasing glucose levels and affect transcription factor activity. Post-translationally, sumoylated. Sumoylation increases its half-life, possibly by blocking ubiquitin-mediated degradation.

The protein resides in the nucleus. The protein localises to the chromosome. In terms of biological role, transcription factor that binds to the sequence motif 5'-CATCCCATAATA-3', and is specifically required to silence expression of fetal hemoglobin in adult erythroid cells. Prevents expression of fetal hemoglobin genes HBG1 and HBG2 through CHD4: acts as a direct transcriptional activator of CHD4, a central component of the NuRD complex that represses transcription of fetal hemoglobin genes HBG1 and HBG2 in erythroid cells. May also activate transcription of matrix-remodeling genes such as MMP1 during fibroblast senescence. May activate transcription of the gap junction gene GJC1, perhaps in response to increasing glucose. However, recent studies suggest that ZNF410 is dedicated to regulate expression of a single gene: CHD4. This is Zinc finger protein 410 from Bos taurus (Bovine).